The chain runs to 226 residues: Large ribosomal subunit protein uL1 (226 aa).

Belongs to the universal ribosomal protein uL1 family. Part of the 50S ribosomal subunit.

Functionally, binds directly to 23S rRNA. The L1 stalk is quite mobile in the ribosome, and is involved in E site tRNA release. In terms of biological role, protein L1 is also a translational repressor protein, it controls the translation of the L11 operon by binding to its mRNA. In Selenomonas ruminantium, this protein is Large ribosomal subunit protein uL1.